The primary structure comprises 251 residues: Isoprenyl transferase (251 aa).

The active site involves Asp-24. Asp-24 contacts Mg(2+). Substrate contacts are provided by residues 25–28, Trp-29, Arg-37, His-41, and 69–71; these read GNGR and STE. Asn-72 (proton acceptor) is an active-site residue. Substrate-binding positions include Trp-73, Arg-75, Arg-186, and 192–194; that span reads RIS. Glu-205 serves as a coordination point for Mg(2+).

It belongs to the UPP synthase family. Homodimer. Mg(2+) serves as cofactor.

Catalyzes the condensation of isopentenyl diphosphate (IPP) with allylic pyrophosphates generating different type of terpenoids. This is Isoprenyl transferase from Chromobacterium violaceum (strain ATCC 12472 / DSM 30191 / JCM 1249 / CCUG 213 / NBRC 12614 / NCIMB 9131 / NCTC 9757 / MK).